The following is a 326-amino-acid chain: Meiotically up-regulated gene 113 protein (326 aa).

The protein localises to the cytoplasm. Its function is as follows. Has a role in meiosis. The polypeptide is Meiotically up-regulated gene 113 protein (mug113) (Schizosaccharomyces pombe (strain 972 / ATCC 24843) (Fission yeast)).